A 146-amino-acid polypeptide reads, in one-letter code: Hemoglobin subunit theta (146 aa).

One can recognise a Globin domain in the interval 2-146 (HFTAEEKSVI…VATALAHKYH (145 aa)). Heme b contacts are provided by His63 and His92.

This sequence belongs to the globin family.

This chain is Hemoglobin subunit theta, found in Sus scrofa (Pig).